A 212-amino-acid polypeptide reads, in one-letter code: Riboflavin kinase (212 aa).

Positions 1–87 (MKMKTLFLLI…YEEISTALYS (87 aa)) are H-T-H motif-like. The segment at 88–212 (GFIVGEVISG…DGDKVRIEVV (125 aa)) is riboflavin kinase. CDP is bound at residue 97–102 (GIGEGA). Thr124 and Asn126 together coordinate Mg(2+). FMN contacts are provided by Thr180 and Glu188. Position 193–196 (193–196 (VKLR)) interacts with CDP.

Belongs to the archaeal riboflavin kinase family. It depends on Mg(2+) as a cofactor.

It carries out the reaction riboflavin + CTP = CDP + FMN + H(+). It functions in the pathway cofactor biosynthesis; FMN biosynthesis; FMN from riboflavin (CTP route): step 1/1. Functionally, catalyzes the CTP-dependent phosphorylation of riboflavin (vitamin B2) to form flavin mononucleotide (FMN). This chain is Riboflavin kinase (ribK), found in Pyrococcus abyssi (strain GE5 / Orsay).